The primary structure comprises 240 residues: UDP-2,3-diacylglucosamine hydrolase (240 aa).

Mn(2+) contacts are provided by Asp-7, His-9, Asp-40, Asn-78, and His-113. 78 to 79 contacts substrate; it reads NR. The substrate site is built by Asp-121, Ser-159, Lys-166, and His-194. Residues His-194 and His-196 each contribute to the Mn(2+) site.

The protein belongs to the LpxH family. It depends on Mn(2+) as a cofactor.

The protein resides in the cell inner membrane. The enzyme catalyses UDP-2-N,3-O-bis[(3R)-3-hydroxytetradecanoyl]-alpha-D-glucosamine + H2O = 2-N,3-O-bis[(3R)-3-hydroxytetradecanoyl]-alpha-D-glucosaminyl 1-phosphate + UMP + 2 H(+). The protein operates within glycolipid biosynthesis; lipid IV(A) biosynthesis; lipid IV(A) from (3R)-3-hydroxytetradecanoyl-[acyl-carrier-protein] and UDP-N-acetyl-alpha-D-glucosamine: step 4/6. Hydrolyzes the pyrophosphate bond of UDP-2,3-diacylglucosamine to yield 2,3-diacylglucosamine 1-phosphate (lipid X) and UMP by catalyzing the attack of water at the alpha-P atom. Involved in the biosynthesis of lipid A, a phosphorylated glycolipid that anchors the lipopolysaccharide to the outer membrane of the cell. This is UDP-2,3-diacylglucosamine hydrolase from Pseudomonas putida (strain ATCC 700007 / DSM 6899 / JCM 31910 / BCRC 17059 / LMG 24140 / F1).